The following is a 123-amino-acid chain: Guanine nucleotide exchange factor MSS4 (123 aa).

M1 bears the N-acetylmethionine mark. Residues 9-123 (ELVSAEGRNR…YVALERVSHE (115 aa)) enclose the MSS4 domain. Zn(2+) contacts are provided by C23, C26, C94, and C97.

This sequence belongs to the DSS4/MSS4 family. As to quaternary structure, interacts with RAB8A. As to expression, ubiquitous.

Functionally, guanine-nucleotide-releasing protein that acts on members of the SEC4/YPT1/RAB subfamily. Stimulates GDP release from both YPT1, RAB3A and RAB10, but is less active on these proteins than on the SEC4 protein. Might play a general role in vesicular transport. The polypeptide is Guanine nucleotide exchange factor MSS4 (Rabif) (Rattus norvegicus (Rat)).